The following is a 364-amino-acid chain: MGSSFGKNFRVTTFGESHGGAVGVILDGCPPKLKINIDLIQNELDRRRPGQSKITTPRNEDDKLEILSGLKEGITLGTPIAMMVRNKDQRPGDYSNLEQVFRPSHADGTYHLKYGIQAGSGGGRASARETIGRVAAGAIAKQLLKNLFNTEILSWVKRIHDIDSQVNKNKLTLSKIDSNIVRCPDDKVAAKMIKRIKELQQDGDSCGGVIECLVKNVPSGLGMPVFDKLEADLAKALMSLPATKGFEIGSGFLGTYLRGSEHNDSFIESDDISKLKTISNNSGGIQGGISNGENIEMKIAFKPTATIGKEQKTVNADGKEVLMKAKGRHDPCVLPRAVPMVDSMVALVLADHLLLHQAQCSIIK.

Residue Arg-47 coordinates NADP(+). FMN contacts are provided by residues 124–126 (RAS), Gly-287, 302–306 (KPTAT), and Arg-328.

Belongs to the chorismate synthase family. Homotetramer. FMNH2 serves as cofactor.

It catalyses the reaction 5-O-(1-carboxyvinyl)-3-phosphoshikimate = chorismate + phosphate. Its pathway is metabolic intermediate biosynthesis; chorismate biosynthesis; chorismate from D-erythrose 4-phosphate and phosphoenolpyruvate: step 7/7. Catalyzes the anti-1,4-elimination of the C-3 phosphate and the C-6 proR hydrogen from 5-enolpyruvylshikimate-3-phosphate (EPSP) to yield chorismate, which is the branch point compound that serves as the starting substrate for the three terminal pathways of aromatic amino acid biosynthesis. This reaction introduces a second double bond into the aromatic ring system. This chain is Chorismate synthase, found in Prochlorococcus marinus subsp. pastoris (strain CCMP1986 / NIES-2087 / MED4).